The sequence spans 236 residues: Leucyl/phenylalanyl-tRNA--protein transferase (236 aa).

It belongs to the L/F-transferase family.

The protein localises to the cytoplasm. It carries out the reaction N-terminal L-lysyl-[protein] + L-leucyl-tRNA(Leu) = N-terminal L-leucyl-L-lysyl-[protein] + tRNA(Leu) + H(+). The enzyme catalyses N-terminal L-arginyl-[protein] + L-leucyl-tRNA(Leu) = N-terminal L-leucyl-L-arginyl-[protein] + tRNA(Leu) + H(+). The catalysed reaction is L-phenylalanyl-tRNA(Phe) + an N-terminal L-alpha-aminoacyl-[protein] = an N-terminal L-phenylalanyl-L-alpha-aminoacyl-[protein] + tRNA(Phe). In terms of biological role, functions in the N-end rule pathway of protein degradation where it conjugates Leu, Phe and, less efficiently, Met from aminoacyl-tRNAs to the N-termini of proteins containing an N-terminal arginine or lysine. The protein is Leucyl/phenylalanyl-tRNA--protein transferase of Shewanella oneidensis (strain ATCC 700550 / JCM 31522 / CIP 106686 / LMG 19005 / NCIMB 14063 / MR-1).